A 293-amino-acid polypeptide reads, in one-letter code: Acetylglutamate kinase (293 aa).

Residues 71 to 72, arginine 93, and asparagine 186 each bind substrate; that span reads GG.

The protein belongs to the acetylglutamate kinase family. ArgB subfamily.

Its subcellular location is the cytoplasm. The enzyme catalyses N-acetyl-L-glutamate + ATP = N-acetyl-L-glutamyl 5-phosphate + ADP. Its pathway is amino-acid biosynthesis; L-arginine biosynthesis; N(2)-acetyl-L-ornithine from L-glutamate: step 2/4. Catalyzes the ATP-dependent phosphorylation of N-acetyl-L-glutamate. This is Acetylglutamate kinase from Synechococcus sp. (strain WH7803).